The sequence spans 272 residues: Regulatory protein RecX (272 aa).

It belongs to the RecX family.

The protein localises to the cytoplasm. Its function is as follows. Modulates RecA activity. This Oceanobacillus iheyensis (strain DSM 14371 / CIP 107618 / JCM 11309 / KCTC 3954 / HTE831) protein is Regulatory protein RecX.